Consider the following 179-residue polypeptide: Dynein light chain Tctex-type 5 (179 aa).

Belongs to the dynein light chain Tctex-type family. In terms of assembly, interacts with ZMYND10.

The chain is Dynein light chain Tctex-type 5 (DYNLT5) from Homo sapiens (Human).